The sequence spans 89 residues: uncharacterized protein (89 aa).

The helical transmembrane segment at 20-39 (SFAMTTYLNLFVKLLIFLYI) threads the bilayer.

The protein resides in the membrane. This is an uncharacterized protein from Escherichia coli (strain K12).